The sequence spans 325 residues: GMP reductase (325 aa).

Catalysis depends on Cys174, which acts as the Thioimidate intermediate. 203-226 contributes to the NADP(+) binding site; that stretch reads LIADGGIRTHGDIAKSIRFGASMV.

The protein belongs to the IMPDH/GMPR family. GuaC type 2 subfamily.

It catalyses the reaction IMP + NH4(+) + NADP(+) = GMP + NADPH + 2 H(+). Functionally, catalyzes the irreversible NADPH-dependent deamination of GMP to IMP. It functions in the conversion of nucleobase, nucleoside and nucleotide derivatives of G to A nucleotides, and in maintaining the intracellular balance of A and G nucleotides. The protein is GMP reductase of Staphylococcus aureus (strain NCTC 8325 / PS 47).